The primary structure comprises 409 residues: Elongation factor Tu, chloroplastic (409 aa).

The region spanning 10–214 is the tr-type G domain; the sequence is KPHINIGTIG…AVDAYIPTPE (205 aa). The tract at residues 19–26 is G1; it reads GHVDHGKT. 19-26 contacts GTP; it reads GHVDHGKT. T26 is a binding site for Mg(2+). The interval 60–64 is G2; sequence GITIN. A G3 region spans residues 81-84; sequence DCPG. GTP-binding positions include 81–85 and 136–139; these read DCPGH and NKQD. Residues 136-139 form a G4 region; sequence NKQD. Positions 174 to 176 are G5; that stretch reads SRL.

This sequence belongs to the TRAFAC class translation factor GTPase superfamily. Classic translation factor GTPase family. EF-Tu/EF-1A subfamily.

Its subcellular location is the plastid. The protein resides in the chloroplast. The enzyme catalyses GTP + H2O = GDP + phosphate + H(+). In terms of biological role, GTP hydrolase that promotes the GTP-dependent binding of aminoacyl-tRNA to the A-site of ribosomes during protein biosynthesis. This Stephanocyclus meneghinianus (Diatom) protein is Elongation factor Tu, chloroplastic (tufA).